The chain runs to 480 residues: Argininosuccinate lyase (480 aa).

This sequence belongs to the lyase 1 family. Argininosuccinate lyase subfamily.

Its subcellular location is the cytoplasm. It carries out the reaction 2-(N(omega)-L-arginino)succinate = fumarate + L-arginine. Its pathway is amino-acid biosynthesis; L-arginine biosynthesis; L-arginine from L-ornithine and carbamoyl phosphate: step 3/3. The polypeptide is Argininosuccinate lyase (Ruthia magnifica subsp. Calyptogena magnifica).